Here is a 426-residue protein sequence, read N- to C-terminus: Serine--tRNA ligase (426 aa).

Thr231–Glu233 lines the L-serine pocket. Position 262 to 264 (Arg262 to Glu264) interacts with ATP. Glu285 lines the L-serine pocket. Glu349 to Ser352 is an ATP binding site. Ser384 is a binding site for L-serine.

This sequence belongs to the class-II aminoacyl-tRNA synthetase family. Type-1 seryl-tRNA synthetase subfamily. In terms of assembly, homodimer. The tRNA molecule binds across the dimer.

The protein localises to the cytoplasm. It catalyses the reaction tRNA(Ser) + L-serine + ATP = L-seryl-tRNA(Ser) + AMP + diphosphate + H(+). The enzyme catalyses tRNA(Sec) + L-serine + ATP = L-seryl-tRNA(Sec) + AMP + diphosphate + H(+). It functions in the pathway aminoacyl-tRNA biosynthesis; selenocysteinyl-tRNA(Sec) biosynthesis; L-seryl-tRNA(Sec) from L-serine and tRNA(Sec): step 1/1. Its function is as follows. Catalyzes the attachment of serine to tRNA(Ser). Is also able to aminoacylate tRNA(Sec) with serine, to form the misacylated tRNA L-seryl-tRNA(Sec), which will be further converted into selenocysteinyl-tRNA(Sec). This is Serine--tRNA ligase from Laribacter hongkongensis (strain HLHK9).